The sequence spans 576 residues: uncharacterized protein (576 aa).

It belongs to the FadG family.

This is an uncharacterized protein from Bacillus subtilis (strain 168).